Reading from the N-terminus, the 552-residue chain is Cytochrome c oxidase subunit 1 (552 aa).

A helical transmembrane segment spans residues 35–55 (VIGIQYLVTAFIFYLIGGLMA). H82 is a Fe(II)-heme a binding site. Helical transmembrane passes span 85 to 105 (IMIF…YLVP), 120 to 140 (ALAF…FLFG), 164 to 184 (WILA…NFIV), 211 to 231 (LLAL…LFDI), 252 to 272 (LFWF…FGIM), and 284 to 304 (IFGY…GLFV). Cu cation is bound by residues H258 and Y262. The segment at residues 258–262 (HPAVY) is a cross-link (1'-histidyl-3'-tyrosine (His-Tyr)). Residues H307 and H308 each coordinate Cu cation. 5 consecutive transmembrane segments (helical) span residues 321–341 (FFTI…FSWV), 355–375 (MLFA…GVTL), 390–410 (VVAH…YAGI), 426–446 (LGIL…LPMH), and 470–490 (ICTI…INII). H393 is a binding site for heme a3. Fe(II)-heme a is bound at residue H395.

Belongs to the heme-copper respiratory oxidase family. Cu(2+) serves as cofactor. Requires heme as cofactor.

Its subcellular location is the cell membrane. It catalyses the reaction 4 Fe(II)-[cytochrome c] + O2 + 8 H(+)(in) = 4 Fe(III)-[cytochrome c] + 2 H2O + 4 H(+)(out). It participates in energy metabolism; oxidative phosphorylation. In terms of biological role, cytochrome c oxidase is the component of the respiratory chain that catalyzes the reduction of oxygen to water. Subunits 1-3 form the functional core of the enzyme complex. CO I is the catalytic subunit of the enzyme. Electrons originating in cytochrome c are transferred via the copper A center of subunit 2 and heme A of subunit 1 to the bimetallic center formed by heme A3 and copper B. The chain is Cytochrome c oxidase subunit 1 (ctaD) from Thermostichus vulcanus (Synechococcus vulcanus).